The primary structure comprises 239 residues: Ribosomal RNA small subunit methyltransferase G (239 aa).

S-adenosyl-L-methionine contacts are provided by residues Gly-79, Phe-84, 130–131 (AE), and Arg-149.

It belongs to the methyltransferase superfamily. RNA methyltransferase RsmG family.

It is found in the cytoplasm. Specifically methylates the N7 position of a guanine in 16S rRNA. This is Ribosomal RNA small subunit methyltransferase G from Lactobacillus delbrueckii subsp. bulgaricus (strain ATCC BAA-365 / Lb-18).